The chain runs to 555 residues: 2-succinyl-5-enolpyruvyl-6-hydroxy-3-cyclohexene-1-carboxylate synthase (555 aa).

It belongs to the TPP enzyme family. MenD subfamily. In terms of assembly, homodimer. The cofactor is Mg(2+). Mn(2+) serves as cofactor. It depends on thiamine diphosphate as a cofactor.

The enzyme catalyses isochorismate + 2-oxoglutarate + H(+) = 5-enolpyruvoyl-6-hydroxy-2-succinyl-cyclohex-3-ene-1-carboxylate + CO2. It participates in quinol/quinone metabolism; 1,4-dihydroxy-2-naphthoate biosynthesis; 1,4-dihydroxy-2-naphthoate from chorismate: step 2/7. The protein operates within quinol/quinone metabolism; menaquinone biosynthesis. Catalyzes the thiamine diphosphate-dependent decarboxylation of 2-oxoglutarate and the subsequent addition of the resulting succinic semialdehyde-thiamine pyrophosphate anion to isochorismate to yield 2-succinyl-5-enolpyruvyl-6-hydroxy-3-cyclohexene-1-carboxylate (SEPHCHC). The sequence is that of 2-succinyl-5-enolpyruvyl-6-hydroxy-3-cyclohexene-1-carboxylate synthase from Bacteroides thetaiotaomicron (strain ATCC 29148 / DSM 2079 / JCM 5827 / CCUG 10774 / NCTC 10582 / VPI-5482 / E50).